A 465-amino-acid polypeptide reads, in one-letter code: Muscarinic acetylcholine receptor M2 (465 aa).

Residues 1–21 (MNNSTNSSNNVALTSPYKTFE) are Extracellular-facing. 3 N-linked (GlcNAc...) asparagine glycosylation sites follow: Asn-2, Asn-3, and Asn-6. The chain crosses the membrane as a helical span at residues 22-44 (VVFIVLVAGSLSLVTIIGNILVM). Residues 45-58 (VSIKVNRHLQTVNN) lie on the Cytoplasmic side of the membrane. The helical transmembrane segment at 59–79 (YFLFSLACADLIIGVFSMNLY) threads the bilayer. Residues 80-96 (TLYTVIGYWPLGPVVCD) are Extracellular-facing. An intrachain disulfide couples Cys-95 to Cys-175. A helical membrane pass occupies residues 97–118 (LWLALDYVVSNASVMNLLIISF). Residues 119–121 (DRY) carry the Important for signaling motif. Topologically, residues 119–138 (DRYFCVTKPLTYPVKRTTKM) are cytoplasmic. Residues 139–161 (AGMMIAAAWVLSFILWAPAILFW) form a helical membrane-spanning segment. Over 162-183 (QFIVGVRTVEDGECYIQFFSNA) the chain is Extracellular. The chain crosses the membrane as a helical span at residues 184–208 (AVTFGTAIAAFYLPVIIMTVLYWHI). Residues 209 to 386 (SRASKSRIKK…PPSREKKVTR (178 aa)) are Cytoplasmic-facing. The disordered stretch occupies residues 217–319 (KKDKKEPVAN…SVGHSKDENS (103 aa)). Ser-231 carries the post-translational modification Phosphoserine. Positions 253–269 (GLEHNKIQNGKTPRDAV) are enriched in basic and acidic residues. 2 stretches are compositionally biased toward polar residues: residues 283–292 (NDSTSVSAVA) and 303–312 (DENTVSTSVG). Residues 387–409 (TILAILLAFIITWAPYNVMVLIN) form a helical membrane-spanning segment. The Extracellular segment spans residues 410–417 (TFCAPCIP). Residues Cys-412 and Cys-415 are joined by a disulfide bond. The chain crosses the membrane as a helical span at residues 418 to 441 (NTVWTIGYWLCYINSTINPACYAL). An Important for signaling motif is present at residues 435–439 (NPACY). Over 442–465 (CNATFKKTFKHLLMCHYKNIGATR) the chain is Cytoplasmic. Residues Thr-445, Thr-449, and Thr-464 each carry the phosphothreonine modification.

This sequence belongs to the G-protein coupled receptor 1 family. Muscarinic acetylcholine receptor subfamily. CHRM2 sub-subfamily. Interacts with ARRB1 and ARRB2. Interacts with RACK1; the interaction regulates CHRM2 internalization. In terms of processing, phosphorylated in response to agonist treatment.

It localises to the cell membrane. Its subcellular location is the postsynaptic cell membrane. Functionally, the muscarinic acetylcholine receptor mediates various cellular responses, including inhibition of adenylate cyclase, breakdown of phosphoinositides and modulation of potassium channels through the action of G proteins. Primary transducing effect is adenylate cyclase inhibition. Signaling promotes phospholipase C activity, leading to the release of inositol trisphosphate (IP3); this then triggers calcium ion release into the cytosol. This Bos taurus (Bovine) protein is Muscarinic acetylcholine receptor M2 (CHRM2).